Consider the following 419-residue polypeptide: Serine hydroxymethyltransferase (419 aa).

(6S)-5,6,7,8-tetrahydrofolate contacts are provided by residues Leu121 and 125–127 (GHL). Lys230 bears the N6-(pyridoxal phosphate)lysine mark. 355–357 (SPF) is a binding site for (6S)-5,6,7,8-tetrahydrofolate.

Belongs to the SHMT family. Homodimer. It depends on pyridoxal 5'-phosphate as a cofactor.

It is found in the cytoplasm. It carries out the reaction (6R)-5,10-methylene-5,6,7,8-tetrahydrofolate + glycine + H2O = (6S)-5,6,7,8-tetrahydrofolate + L-serine. The protein operates within one-carbon metabolism; tetrahydrofolate interconversion. It functions in the pathway amino-acid biosynthesis; glycine biosynthesis; glycine from L-serine: step 1/1. In terms of biological role, catalyzes the reversible interconversion of serine and glycine with tetrahydrofolate (THF) serving as the one-carbon carrier. This reaction serves as the major source of one-carbon groups required for the biosynthesis of purines, thymidylate, methionine, and other important biomolecules. Also exhibits THF-independent aldolase activity toward beta-hydroxyamino acids, producing glycine and aldehydes, via a retro-aldol mechanism. This Streptococcus equi subsp. zooepidemicus (strain MGCS10565) protein is Serine hydroxymethyltransferase.